The following is a 551-amino-acid chain: Arginine--tRNA ligase (551 aa).

Positions 123–133 (ANPTGPLTIGR) match the 'HIGH' region motif.

The protein belongs to the class-I aminoacyl-tRNA synthetase family. Monomer.

It localises to the cytoplasm. The enzyme catalyses tRNA(Arg) + L-arginine + ATP = L-arginyl-tRNA(Arg) + AMP + diphosphate. This is Arginine--tRNA ligase from Prosthecochloris aestuarii (strain DSM 271 / SK 413).